A 77-amino-acid polypeptide reads, in one-letter code: Early E3 9.0 kDa glycoprotein (77 aa).

An N-linked (GlcNAc...) asparagine; by host glycan is attached at N7. The chain crosses the membrane as a helical span at residues 27–47 (ITILIVIGILILSVILYFIFC).

It belongs to the adenoviridae E3A-1 family.

The protein resides in the host nucleus membrane. The chain is Early E3 9.0 kDa glycoprotein from Human adenovirus B serotype 3 (HAdV-3).